Here is a 420-residue protein sequence, read N- to C-terminus: Serine palmitoyltransferase (420 aa).

Over residues 1–21 the composition is skewed to polar residues; sequence MKHNLQDNLQGEQMANTNSNG. Positions 1–25 are disordered; sequence MKHNLQDNLQGEQMANTNSNGGKKP. Residues 132-133, histidine 233, threonine 261, and serine 263 each bind pyridoxal 5'-phosphate; that span reads GM. Lysine 264 bears the N6-(pyridoxal phosphate)lysine mark.

The protein belongs to the class-II pyridoxal-phosphate-dependent aminotransferase family. In terms of assembly, homodimer. It depends on pyridoxal 5'-phosphate as a cofactor.

Its subcellular location is the cytoplasm. The protein resides in the cell inner membrane. It carries out the reaction L-serine + hexadecanoyl-CoA + H(+) = 3-oxosphinganine + CO2 + CoA. It functions in the pathway lipid metabolism; sphingolipid metabolism. Its activity is regulated as follows. Significantly inhibited by palmitoyl-CoA concentrations greater than 100 uM. Functionally, catalyzes the condensation of L-serine with palmitoyl-CoA (hexadecanoyl-CoA) to produce 3-oxosphinganine. The protein is Serine palmitoyltransferase of Bacteriovorax stolpii (Bdellovibrio stolpii).